A 242-amino-acid polypeptide reads, in one-letter code: Biosynthetic peptidoglycan transglycosylase (242 aa).

The chain crosses the membrane as a helical span at residues Ile19–Val39.

The protein belongs to the glycosyltransferase 51 family.

The protein localises to the cell inner membrane. The enzyme catalyses [GlcNAc-(1-&gt;4)-Mur2Ac(oyl-L-Ala-gamma-D-Glu-L-Lys-D-Ala-D-Ala)](n)-di-trans,octa-cis-undecaprenyl diphosphate + beta-D-GlcNAc-(1-&gt;4)-Mur2Ac(oyl-L-Ala-gamma-D-Glu-L-Lys-D-Ala-D-Ala)-di-trans,octa-cis-undecaprenyl diphosphate = [GlcNAc-(1-&gt;4)-Mur2Ac(oyl-L-Ala-gamma-D-Glu-L-Lys-D-Ala-D-Ala)](n+1)-di-trans,octa-cis-undecaprenyl diphosphate + di-trans,octa-cis-undecaprenyl diphosphate + H(+). Its pathway is cell wall biogenesis; peptidoglycan biosynthesis. Functionally, peptidoglycan polymerase that catalyzes glycan chain elongation from lipid-linked precursors. The polypeptide is Biosynthetic peptidoglycan transglycosylase (Salmonella choleraesuis (strain SC-B67)).